Reading from the N-terminus, the 487-residue chain is UDP-N-acetylmuramate--L-alanine ligase (487 aa).

ATP is bound at residue 126–132 (GTHGKTT).

The protein belongs to the MurCDEF family.

The protein resides in the cytoplasm. It carries out the reaction UDP-N-acetyl-alpha-D-muramate + L-alanine + ATP = UDP-N-acetyl-alpha-D-muramoyl-L-alanine + ADP + phosphate + H(+). Its pathway is cell wall biogenesis; peptidoglycan biosynthesis. Its function is as follows. Cell wall formation. This chain is UDP-N-acetylmuramate--L-alanine ligase, found in Proteus mirabilis (strain HI4320).